Reading from the N-terminus, the 723-residue chain is Probable inactive serine/threonine-protein kinase fnkD (723 aa).

In terms of domain architecture, Protein kinase spans 33–276; that stretch reads WEIITQLESN…TTSLPKYSTL (244 aa). FNIP repeat units follow at residues 301 to 342, 343 to 384, 385 to 426, 524 to 565, 566 to 606, and 647 to 690; these read FNQP…ELAS, FNQT…LLSS, FNQP…SLAS, FNQS…ILPS, FNHP…LGDE, and FNIE…FGIT.

Belongs to the protein kinase superfamily. STE Ser/Thr protein kinase family.

In Dictyostelium discoideum (Social amoeba), this protein is Probable inactive serine/threonine-protein kinase fnkD (fnkD-1).